Here is a 191-residue protein sequence, read N- to C-terminus: MHNVVFVLGPPGSGKGTICAKIQENLNYVHLSAGDLLRAERQREGSEFGALIESHIKNGSIVPVEITCSLLENAMKACGDAKGFLVDGFPRNEDNLQGWNKQMDGKALVQFVLFLSCPVSICIERCLNRGQGRTDDNEESLKKRVETYNQQTFPIIEHFEKSGLVREVKSERPVDVVYADVEKVFDAANKK.

Glycine 12 to threonine 17 is an ATP binding site. The tract at residues serine 32 to valine 62 is NMP. Residues arginine 38, serine 60 to valine 62, and glycine 88 to arginine 91 contribute to the a ribonucleoside 5'-phosphate site. Asparagine 95 lines the CMP pocket. An LID region spans residues asparagine 128 to aspartate 136. An ATP-binding site is contributed by arginine 129. A ribonucleoside 5'-phosphate is bound by residues arginine 133 and arginine 144. Arginine 172 provides a ligand contact to ATP.

This sequence belongs to the adenylate kinase family. UMP-CMP kinase subfamily. In terms of assembly, monomer. Requires Mg(2+) as cofactor. In terms of tissue distribution, expressed in neurons and the pharynx.

It localises to the cytoplasm. The protein resides in the nucleus. It catalyses the reaction CMP + ATP = CDP + ADP. The enzyme catalyses dCMP + ATP = dCDP + ADP. It carries out the reaction UMP + ATP = UDP + ADP. Functionally, catalyzes the phosphorylation of pyrimidine nucleoside monophosphates at the expense of ATP. Plays an important role in de novo pyrimidine nucleotide biosynthesis. Has preference for UMP and CMP as phosphate acceptors. This chain is UMP-CMP kinase 2, found in Caenorhabditis elegans.